The following is a 92-amino-acid chain: Large ribosomal subunit protein bL27 (92 aa).

Residues 1 to 9 constitute a propeptide that is removed on maturation; the sequence is MLVMNLQYF.

Belongs to the bacterial ribosomal protein bL27 family. In terms of processing, the N-terminus is cleaved by ribosomal processing cysteine protease Prp.

The polypeptide is Large ribosomal subunit protein bL27 (Heliobacterium modesticaldum (strain ATCC 51547 / Ice1)).